The primary structure comprises 521 residues: Probable protein kinase UbiB (521 aa).

The region spanning 119-497 (SFEREPVASA…QKLTNRLLQA (379 aa)) is the Protein kinase domain. Residues 125–133 (VASASIAQV) and lysine 151 contribute to the ATP site. The Proton acceptor role is filled by aspartate 286. The chain crosses the membrane as a helical span at residues 496 to 516 (QAIVSAGIGFVIALILLQLVV).

This sequence belongs to the ABC1 family. UbiB subfamily.

Its subcellular location is the cell inner membrane. It functions in the pathway cofactor biosynthesis; ubiquinone biosynthesis [regulation]. Is probably a protein kinase regulator of UbiI activity which is involved in aerobic coenzyme Q (ubiquinone) biosynthesis. The protein is Probable protein kinase UbiB of Delftia acidovorans (strain DSM 14801 / SPH-1).